A 434-amino-acid chain; its full sequence is Putative nuclease OPG089 (434 aa).

Asp33, Asp74, Glu168, Asp170, Asp196, and Asp198 together coordinate Mg(2+).

It belongs to the XPG/RAD2 endonuclease family. FEN1 subfamily. It depends on Mg(2+) as a cofactor.

It localises to the virion. In terms of biological role, putative nuclease that seems to be required for double-strand break repair, homologous recombination, and production of full-length viral genomic DNA. This is Putative nuclease OPG089 (OPG089) from Vaccinia virus (strain Western Reserve) (VACV).